Consider the following 209-residue polypeptide: ATP-dependent Clp protease proteolytic subunit (209 aa).

The active-site Nucleophile is the Ser113. His138 is a catalytic residue.

Belongs to the peptidase S14 family. In terms of assembly, fourteen ClpP subunits assemble into 2 heptameric rings which stack back to back to give a disk-like structure with a central cavity, resembling the structure of eukaryotic proteasomes.

The protein resides in the cytoplasm. The enzyme catalyses Hydrolysis of proteins to small peptides in the presence of ATP and magnesium. alpha-casein is the usual test substrate. In the absence of ATP, only oligopeptides shorter than five residues are hydrolyzed (such as succinyl-Leu-Tyr-|-NHMec, and Leu-Tyr-Leu-|-Tyr-Trp, in which cleavage of the -Tyr-|-Leu- and -Tyr-|-Trp bonds also occurs).. Functionally, cleaves peptides in various proteins in a process that requires ATP hydrolysis. Has a chymotrypsin-like activity. Plays a major role in the degradation of misfolded proteins. This chain is ATP-dependent Clp protease proteolytic subunit, found in Blochmanniella floridana.